The primary structure comprises 908 residues: Probable serine/threonine-protein kinase DDB_G0278521 (908 aa).

Over 1–153 (MSNNKIIESL…RGEKLSTLDR (153 aa)) the chain is Extracellular. A helical transmembrane segment spans residues 154 to 174 (IICFSIIYSQDQILLFLLNFI). Residues 175-908 (LSNINCNNNN…SDQNDSDLYD (734 aa)) are Cytoplasmic-facing. 5 ANK repeats span residues 258-289 (LKVYPIYFAIVKVIGGGSLVRFLLSILPNVYN), 300-326 (TNRSALFYSTTREMTLLLLQLGCNIHD), 330-361 (KGMLPIHYHSLNGHVDVVKCLIDDSTINALDQ), 362-391 (SNNTPLNLASLSGNLSLAKILLNSGARLSI), and 395-424 (NGRYPIHNACVNGNIDLIRYFLELYSKMNS). The span at 461-472 (NSNNLTNSNSSS) shows a compositional bias: low complexity. Residues 461 to 491 (NSNNLTNSNSSSVGGLRISNGGNTQQQSIQI) form a disordered region. The segment covering 480–490 (NGGNTQQQSIQ) has biased composition (polar residues). An ANK 6 repeat occupies 495–524 (ENNTPIDLLVLNNHFTIAIELLKYEGYIVG). Positions 530–817 (FKTARKIGAG…LPIANIPKFL (288 aa)) constitute a Protein kinase domain. Residues 536–544 (IGAGAFGDV) and Lys-557 contribute to the ATP site. The Proton acceptor role is filled by Asp-677.

This sequence belongs to the protein kinase superfamily. TKL Ser/Thr protein kinase family.

It is found in the membrane. The catalysed reaction is L-seryl-[protein] + ATP = O-phospho-L-seryl-[protein] + ADP + H(+). It catalyses the reaction L-threonyl-[protein] + ATP = O-phospho-L-threonyl-[protein] + ADP + H(+). The sequence is that of Probable serine/threonine-protein kinase DDB_G0278521 from Dictyostelium discoideum (Social amoeba).